The sequence spans 114 residues: Endoribonuclease MazF2 (114 aa).

This sequence belongs to the PemK/MazF family. Probably forms a complex with cognate antitoxin MazE2.

Toxic component of a type II toxin-antitoxin (TA) system. Acts as an endoribonuclease on single-strand RNA, cleaving between the second and third bases in the sequences CUCCU and UUCCU. Neutralized by coexpression with cognate antitoxin MazE2. This Mycobacterium bovis (strain ATCC BAA-935 / AF2122/97) protein is Endoribonuclease MazF2 (mazF2).